The primary structure comprises 287 residues: ATP synthase gamma chain (287 aa).

It belongs to the ATPase gamma chain family. F-type ATPases have 2 components, CF(1) - the catalytic core - and CF(0) - the membrane proton channel. CF(1) has five subunits: alpha(3), beta(3), gamma(1), delta(1), epsilon(1). CF(0) has three main subunits: a, b and c.

The protein localises to the cell inner membrane. In terms of biological role, produces ATP from ADP in the presence of a proton gradient across the membrane. The gamma chain is believed to be important in regulating ATPase activity and the flow of protons through the CF(0) complex. The chain is ATP synthase gamma chain from Citrobacter koseri (strain ATCC BAA-895 / CDC 4225-83 / SGSC4696).